A 312-amino-acid polypeptide reads, in one-letter code: Protein atonal (312 aa).

Disordered stretches follow at residues 136-174 and 220-248; these read SNVG…TAAA and NDGS…GKQI. Residues 162–174 show a composition bias toward low complexity; sequence PSTTATSTPTAAA. In terms of domain architecture, bHLH spans 255–307; the sequence is KRRLAANARERRRMQNLNQAFDRLRQYLPCLGNDRQLSKHETLQMAQTYISAL.

Efficient DNA binding requires dimerization with another bHLH protein. Forms a heterodimer with Daughterless. As to expression, proneural clusters and sense organ precursors of the chordotonal organs, optic furrow of the eye-antennal disk and developing brain lobe.

It localises to the nucleus. Functionally, developmental protein involved in neurogenesis. Required for the formation of chordotonal organs and photoreceptors. Seems to bind to E boxes. Specifically required for the photoreceptor R8 selection. The sequence is that of Protein atonal (ato) from Drosophila melanogaster (Fruit fly).